The following is a 171-amino-acid chain: Protein-export protein SecB (171 aa).

This sequence belongs to the SecB family. As to quaternary structure, homotetramer, a dimer of dimers. One homotetramer interacts with 1 SecA dimer.

It localises to the cytoplasm. One of the proteins required for the normal export of preproteins out of the cell cytoplasm. It is a molecular chaperone that binds to a subset of precursor proteins, maintaining them in a translocation-competent state. It also specifically binds to its receptor SecA. This is Protein-export protein SecB from Jannaschia sp. (strain CCS1).